Consider the following 255-residue polypeptide: MAATDLLAGRATLSRSLRLLSAFRFEQTDPDRFYGALASDTVAMVDDLWRATTGTSTRNLTVLDVGGGPGYFASAFTDAGLHYVGVEPDPGEMHAAAPRTHSRAGSFVRASGTALPFADGSVDICLSSNVAEHVAQPWRLGEEMLRVTRPGGLAVLSYTVWLGPFGGHEMGLSHYLGGYRAAERYTRRHGHRPKNDYGSSLFAVSAADGLRWARSTGALAAAFPRYHPRWAWGLTRVPGVREFLVSNLVLVLRPT.

It belongs to the methyltransferase superfamily.

This is an uncharacterized protein from Mycolicibacterium gilvum (strain PYR-GCK) (Mycobacterium gilvum (strain PYR-GCK)).